The primary structure comprises 419 residues: UDP-N-acetylglucosamine 1-carboxyvinyltransferase (419 aa).

22–23 contacts phosphoenolpyruvate; sequence KN. Residue Arg93 coordinates UDP-N-acetyl-alpha-D-glucosamine. Cys117 serves as the catalytic Proton donor. Cys117 is modified (2-(S-cysteinyl)pyruvic acid O-phosphothioketal). The UDP-N-acetyl-alpha-D-glucosamine site is built by Asp307 and Ile329.

Belongs to the EPSP synthase family. MurA subfamily.

The protein resides in the cytoplasm. It carries out the reaction phosphoenolpyruvate + UDP-N-acetyl-alpha-D-glucosamine = UDP-N-acetyl-3-O-(1-carboxyvinyl)-alpha-D-glucosamine + phosphate. Its pathway is cell wall biogenesis; peptidoglycan biosynthesis. Cell wall formation. Adds enolpyruvyl to UDP-N-acetylglucosamine. The polypeptide is UDP-N-acetylglucosamine 1-carboxyvinyltransferase (Shewanella sp. (strain ANA-3)).